Reading from the N-terminus, the 156-residue chain is Small ribosomal subunit protein uS7 (156 aa).

Belongs to the universal ribosomal protein uS7 family. As to quaternary structure, part of the 30S ribosomal subunit. Contacts proteins S9 and S11.

Its function is as follows. One of the primary rRNA binding proteins, it binds directly to 16S rRNA where it nucleates assembly of the head domain of the 30S subunit. Is located at the subunit interface close to the decoding center, probably blocks exit of the E-site tRNA. The chain is Small ribosomal subunit protein uS7 from Mesomycoplasma hyopneumoniae (strain 232) (Mycoplasma hyopneumoniae).